Reading from the N-terminus, the 148-residue chain is D-aminoacyl-tRNA deacylase (148 aa).

The short motif at 137 to 138 (GP) is the Gly-cisPro motif, important for rejection of L-amino acids element.

This sequence belongs to the DTD family. Homodimer.

The protein localises to the cytoplasm. The enzyme catalyses glycyl-tRNA(Ala) + H2O = tRNA(Ala) + glycine + H(+). It carries out the reaction a D-aminoacyl-tRNA + H2O = a tRNA + a D-alpha-amino acid + H(+). Its function is as follows. An aminoacyl-tRNA editing enzyme that deacylates mischarged D-aminoacyl-tRNAs. Also deacylates mischarged glycyl-tRNA(Ala), protecting cells against glycine mischarging by AlaRS. Acts via tRNA-based rather than protein-based catalysis; rejects L-amino acids rather than detecting D-amino acids in the active site. By recycling D-aminoacyl-tRNA to D-amino acids and free tRNA molecules, this enzyme counteracts the toxicity associated with the formation of D-aminoacyl-tRNA entities in vivo and helps enforce protein L-homochirality. The chain is D-aminoacyl-tRNA deacylase from Enterococcus faecalis (strain ATCC 700802 / V583).